The chain runs to 266 residues: MRLIPLRNTAEVGKWAARHIVNRINAFKPTAERPFILGLPTGGTPMEAYKHLIAMHKAGEVSFKHVVTFNMDEYVGLPKEHPESYYTFMHTNFFDHVDIPAENINLLNGNAADIDAECRRYEEKIKSYGKIHLFMGGVGVDGHIAFNEPASSLASRTRIKTLTQETRIANSRFFGGDANLVPKYALTVGVGTLLDAEEVMILVTGHGKAQALQAAVEGSINHMWTISCLQLHAKAIMVCDEPSTMELKVKTVKYFRELEAENVKDL.

Aspartate 72 serves as the catalytic Proton acceptor; for enolization step. Catalysis depends on aspartate 141, which acts as the For ring-opening step. Histidine 143 functions as the Proton acceptor; for ring-opening step in the catalytic mechanism. The For ring-opening step role is filled by glutamate 148.

It belongs to the glucosamine/galactosamine-6-phosphate isomerase family. NagB subfamily. In terms of assembly, homohexamer.

It carries out the reaction alpha-D-glucosamine 6-phosphate + H2O = beta-D-fructose 6-phosphate + NH4(+). The protein operates within amino-sugar metabolism; N-acetylneuraminate degradation; D-fructose 6-phosphate from N-acetylneuraminate: step 5/5. Allosterically activated by N-acetylglucosamine 6-phosphate (GlcNAc6P). Catalyzes the reversible isomerization-deamination of glucosamine 6-phosphate (GlcN6P) to form fructose 6-phosphate (Fru6P) and ammonium ion. The sequence is that of Glucosamine-6-phosphate deaminase from Yersinia pseudotuberculosis serotype O:1b (strain IP 31758).